Here is a 125-residue protein sequence, read N- to C-terminus: Small ribosomal subunit protein bS6 (125 aa).

The protein belongs to the bacterial ribosomal protein bS6 family.

In terms of biological role, binds together with bS18 to 16S ribosomal RNA. This is Small ribosomal subunit protein bS6 (rpsF) from Campylobacter jejuni subsp. jejuni serotype O:2 (strain ATCC 700819 / NCTC 11168).